The primary structure comprises 422 residues: Probable protein phosphatase 2C 43 (422 aa).

The PPM-type phosphatase domain occupies 117–393 (SSGSYADKGD…DNVTVVVICF (277 aa)). Asp163, Gly164, Asp341, and Asp384 together coordinate Mn(2+).

Belongs to the PP2C family. It depends on Mg(2+) as a cofactor. Requires Mn(2+) as cofactor.

It catalyses the reaction O-phospho-L-seryl-[protein] + H2O = L-seryl-[protein] + phosphate. It carries out the reaction O-phospho-L-threonyl-[protein] + H2O = L-threonyl-[protein] + phosphate. The chain is Probable protein phosphatase 2C 43 from Arabidopsis thaliana (Mouse-ear cress).